Reading from the N-terminus, the 359-residue chain is Phospho-N-acetylmuramoyl-pentapeptide-transferase (359 aa).

Transmembrane regions (helical) follow at residues 21–41 (YITFRTIYASLTAFLICFLLG), 73–93 (TMGGLLIVFSVLVACLLWADL), 98–118 (IWVTLAALAGFTTIGFIDDYL), 143–163 (GICLLIFAASDTNTVLLVPFF), 166–186 (VAPDLGLFYIVLGVFVIVGTS), 202–222 (PLVISFVAYMVFAYVAGNAII), 237–257 (VTVFCGAMAGGLMGFLWFNAY), 261–281 (IFMGDVGSLSLGGALGTVAII), 286–306 (ILLTLVGGLFVVETLSVIFQV), and 336–356 (KIIVRFWIIAIALALIAVSTL).

The protein belongs to the glycosyltransferase 4 family. MraY subfamily. Requires Mg(2+) as cofactor.

The protein localises to the cell inner membrane. The catalysed reaction is UDP-N-acetyl-alpha-D-muramoyl-L-alanyl-gamma-D-glutamyl-meso-2,6-diaminopimeloyl-D-alanyl-D-alanine + di-trans,octa-cis-undecaprenyl phosphate = di-trans,octa-cis-undecaprenyl diphospho-N-acetyl-alpha-D-muramoyl-L-alanyl-D-glutamyl-meso-2,6-diaminopimeloyl-D-alanyl-D-alanine + UMP. The protein operates within cell wall biogenesis; peptidoglycan biosynthesis. Functionally, catalyzes the initial step of the lipid cycle reactions in the biosynthesis of the cell wall peptidoglycan: transfers peptidoglycan precursor phospho-MurNAc-pentapeptide from UDP-MurNAc-pentapeptide onto the lipid carrier undecaprenyl phosphate, yielding undecaprenyl-pyrophosphoryl-MurNAc-pentapeptide, known as lipid I. The polypeptide is Phospho-N-acetylmuramoyl-pentapeptide-transferase (Desulfosudis oleivorans (strain DSM 6200 / JCM 39069 / Hxd3) (Desulfococcus oleovorans)).